The primary structure comprises 496 residues: MLO-like protein 15 (496 aa).

Residues 1–9 (MAGGGTTLE) lie on the Extracellular side of the membrane. The helical transmembrane segment at 10-30 (YTPTWVVALVCSVIVSISFAV) threads the bilayer. Residues 31–59 (ERLIHRAGKHFKNNDQKQLFGALQKIKEE) lie on the Cytoplasmic side of the membrane. A helical transmembrane segment spans residues 60–80 (LMLVGFISLLLSVGQSKIAKI). The Extracellular segment spans residues 81 to 147 (CISKELSEKF…MSLSALHELH (67 aa)). Residues 148-168 (IFIFVLAVAHIIFCLLTIVFG) traverse the membrane as a helical segment. Residues 169–269 (TMKIKQWKKW…KYLMRALNSD (101 aa)) are Cytoplasmic-facing. The chain crosses the membrane as a helical span at residues 270-290 (FKKVVGISWYLWVFVVLFLLL). Asn-291 is a topological domain (extracellular). Residues 292 to 312 (IVAWHVYFWLAFIPLILLLAV) form a helical membrane-spanning segment. The Cytoplasmic segment spans residues 313–355 (GTKLEHIITDLAHEVAEKHIAVEGDLVVRPSDDLFWFQSPRLV). The chain crosses the membrane as a helical span at residues 356–376 (LFLIHFILFQNSFEIAYFFFI). Residues 377–397 (LFQFGWDSCIMDHVKFVIPRL) are Extracellular-facing. A helical membrane pass occupies residues 398–418 (VIGVIIQLLCSYSTLPLYALV). The Cytoplasmic portion of the chain corresponds to 419-496 (TQMGSSFKGA…KEKSEIAHHD (78 aa)). The segment at 432–453 (EQTQEHLVGWAKMAKRGVKKGA) is calmodulin-binding. Residues 454–496 (TQVGTSHDATSPRPSIQLNSLLGKGSSQQNQNPKEKSEIAHHD) are disordered. A compositionally biased stretch (polar residues) spans 455 to 485 (QVGTSHDATSPRPSIQLNSLLGKGSSQQNQN). Residues 486 to 496 (PKEKSEIAHHD) are compositionally biased toward basic and acidic residues.

This sequence belongs to the MLO family.

The protein localises to the membrane. May be involved in modulation of pathogen defense and leaf cell death. Activity seems to be regulated by Ca(2+)-dependent calmodulin binding and seems not to require heterotrimeric G proteins. The polypeptide is MLO-like protein 15 (MLO15) (Arabidopsis thaliana (Mouse-ear cress)).